We begin with the raw amino-acid sequence, 429 residues long: MSVNIVVIGMQWGDEGKGKIVDFLATHADYVVRYQGGHNAGHTLVVDNKKIVLHVLPSGILHNNIISIIANGVVLEPQSFINEIKLLEAENLCIRKRIFISESCNLIFPYHVFMDLAREKQKYRNFIGTTGCGIGPAYEDKVARRGLCVGDLLDLSFFSRKLEENVNFYNHQFTNFYHTEKVSFKEIFSNLLKVSDVIISMINDIPDLLNNAINDNKSIIFEGAQGTLLDIDHGIYPYVTSSSSVSGSVCSGAGVGIKNLGDIYGVVKAYSTRVGNGPFPTELFGELDAYFCRFGNEFGATTGRRRRTGWLDIVLLRRVISINSITKICLTKLDILDNLEKILICTSYHLKGVKNKKWDSVPFCRNDWDKIKPVYETFLGWKQNTRGITEFDELPKLAKKYIHRIEELIKVPVYIISTGPDRQDIIIRN.

Residues Gly13–Lys19 and Gly41–Thr43 contribute to the GTP site. Residue Asp14 is the Proton acceptor of the active site. 2 residues coordinate Mg(2+): Asp14 and Gly41. IMP contacts are provided by residues Asp14–Lys17, Asn39–His42, Thr130, Arg144, Gln225, Thr240, and Arg304. Residue His42 is the Proton donor of the active site. Ala300–Arg306 lines the substrate pocket. Residues Arg306, Lys332–Asp334, and Ser417–Gly419 contribute to the GTP site.

It belongs to the adenylosuccinate synthetase family. In terms of assembly, homodimer. Mg(2+) serves as cofactor.

Its subcellular location is the cytoplasm. The catalysed reaction is IMP + L-aspartate + GTP = N(6)-(1,2-dicarboxyethyl)-AMP + GDP + phosphate + 2 H(+). The protein operates within purine metabolism; AMP biosynthesis via de novo pathway; AMP from IMP: step 1/2. Plays an important role in the de novo pathway of purine nucleotide biosynthesis. Catalyzes the first committed step in the biosynthesis of AMP from IMP. This is Adenylosuccinate synthetase from Buchnera aphidicola subsp. Baizongia pistaciae (strain Bp).